A 916-amino-acid chain; its full sequence is MNYKDTLLMPKTDFPMRGGLPNKEPQIQEMWDNDDQYRKALEKNKNNPSFILHDGPPYANGNLHMGHALNKIIKDFIVRYKTMQGFYAPYVPGWDTHGLPIEQALTKKGVDRKKMSVAEFREKCKEFALKQIDIQKKDFKRLGVRGDFNNPYITLTPEYEAAQIRLFGEMADKGLIYKGKKPVYWSPSSESSLAEAEIEYHDKRSASIYVAFDVKDSKGKVDSDAQFIIWTTTPWTIPSNVAITVHPELKYGQYNVDGHKYIVAQALSEEVAEALGWDKDSIQLEKEFTGKELEFVEAQHPFLDRVSLVINGEHVTTDAGTGCVHTAPGHGEDDYIVGQKYDLPVISPLNDKGVFTEEGGPFEGMFYDKANKAVTDLLKEKDALLKLDFITHSYPHDWRTKKPVIFRATPQWFASINKVRQDILDAIEDTNFKVDWGKTRIYNMIRDRGEWVISRQRVWGVPLPVFYAENGDIIMTKETVNHVADLFEKHGSNIWFEKEAKELLPEGFSHPGSPNGEFTKETDIMDVWFDSGSSHRGVLETRPELSFPADLYFEGSDQYRGWFNSSITTAVATRGQAPYKFLLSHGFVMDGEGKKMSKSLGNVIVPDQVVKQKGADIARLWVSSTDYLSDVRISDEILKQTSDVYRKIRNTLRFMLGNINDFNPETDSIAETNLLEVDRYLLNRLREFTASTINNYENFDYLNIYQEVQNFINVELSNFYLDYGKDILYIEKKDSHKRRSMQTVLYQILVDMTKLLAPILVHTAEEVWSHTPHVKEESVHLSDMPKVVDVDEELLEKWNTFMNLRDDVNRALEQARNEKVIGKSLEAKVVIGSNESFNTAEFLQQFNDLQQLFIVSQVEVKDKVNDGVSYQYGDIHIKHAEGEKCERCWNYTEELGSVGELEHLCPRCQEVVKTLV.

Residues 57–67 (PYANGNLHMGH) carry the 'HIGH' region motif. L-isoleucyl-5'-AMP is bound at residue Glu554. Positions 595–599 (KMSKS) match the 'KMSKS' region motif. Lys598 is an ATP binding site. 4 residues coordinate Zn(2+): Cys885, Cys888, Cys905, and Cys908.

It belongs to the class-I aminoacyl-tRNA synthetase family. IleS type 1 subfamily. Monomer. The cofactor is Zn(2+).

Its subcellular location is the cytoplasm. The enzyme catalyses tRNA(Ile) + L-isoleucine + ATP = L-isoleucyl-tRNA(Ile) + AMP + diphosphate. Catalyzes the attachment of isoleucine to tRNA(Ile). As IleRS can inadvertently accommodate and process structurally similar amino acids such as valine, to avoid such errors it has two additional distinct tRNA(Ile)-dependent editing activities. One activity is designated as 'pretransfer' editing and involves the hydrolysis of activated Val-AMP. The other activity is designated 'posttransfer' editing and involves deacylation of mischarged Val-tRNA(Ile). The protein is Isoleucine--tRNA ligase (ileS) of Staphylococcus epidermidis (strain ATCC 35984 / DSM 28319 / BCRC 17069 / CCUG 31568 / BM 3577 / RP62A).